Consider the following 149-residue polypeptide: UPF0260 protein PFL_1499 (149 aa).

This sequence belongs to the UPF0260 family.

This is UPF0260 protein PFL_1499 from Pseudomonas fluorescens (strain ATCC BAA-477 / NRRL B-23932 / Pf-5).